We begin with the raw amino-acid sequence, 416 residues long: Cyclic dinucleotide synthase CdnG (416 aa).

Residue Ser-72 coordinates GTP. Residues Asp-89, Asp-91, and Asp-140 contribute to the active site. Position 91 (Asp-91) interacts with GTP. Asp-91 is a binding site for Mg(2+). The disordered stretch occupies residues 145 to 167 (RRRAPKEKEGEIPHAKKGTRSDP). The segment covering 150–167 (KEKEGEIPHAKKGTRSDP) has biased composition (basic and acidic residues). Residues Lys-236, Ser-253, Glu-305, Arg-306, and Asp-309 each contribute to the GTP site.

Belongs to the CD-NTase family. G10 subfamily. Mg(2+) is required as a cofactor.

The enzyme catalyses UTP + GTP = 3',3'-cGMP-UMP + 2 diphosphate. The catalysed reaction is GTP + ATP = 3',3'-cGAMP + 2 diphosphate. It catalyses the reaction 2 ATP = 3',3'-c-di-AMP + 2 diphosphate. Its function is as follows. Cyclic nucleotide synthase (second messenger synthase) of a CBASS antivirus system. CBASS (cyclic oligonucleotide-based antiphage signaling system) provides immunity against bacteriophage. The CD-NTase protein synthesizes cyclic nucleotides in response to infection; these serve as specific second messenger signals. The signals activate a diverse range of effectors, leading to bacterial cell death and thus abortive phage infection. A type II-short CBASS system. In terms of biological role, cyclic dinucleotide synthase that catalyzes the synthesis of predominantly 3'3'-cGMP-UMP, followed by 3'3'-cGAMP and c-di-AMP in a reaction mixture of ATP, CTP, GTP and UTP. The cyclic nucleotide products are second messengers that activate the CBASS Cap5 effector nuclease, leading to DNA degradation and probably cell death. Cyclic nucleotides do not activate the effector equally; reactions with ATP/GTP, ATP/UTP and ATP alone activate Cap5, whereas reaction with GTP/UTP (the major in vitro product) do not. The polypeptide is Cyclic dinucleotide synthase CdnG (Bradyrhizobium diazoefficiens (strain JCM 10833 / BCRC 13528 / IAM 13628 / NBRC 14792 / USDA 110)).